A 335-amino-acid polypeptide reads, in one-letter code: Nucleoid-associated protein YejK (335 aa).

It belongs to the YejK family.

The protein resides in the cytoplasm. The protein localises to the nucleoid. The chain is Nucleoid-associated protein YejK from Shigella sonnei (strain Ss046).